A 178-amino-acid chain; its full sequence is Thymidine kinase (178 aa).

An ATP-binding site is contributed by G13–S20. E85 (proton acceptor) is an active-site residue. F115 provides a ligand contact to substrate. C140 and C143 together coordinate Zn(2+). I159 to G163 is a binding site for substrate. Residues C172 and C175 each coordinate Zn(2+).

This sequence belongs to the thymidine kinase family.

The catalysed reaction is thymidine + ATP = dTMP + ADP + H(+). This Myxoma virus (strain Uriarra) (MYXV) protein is Thymidine kinase (TK).